Consider the following 424-residue polypeptide: Carbohydrate sulfotransferase 8 (424 aa).

Over 1–10 the chain is Cytoplasmic; that stretch reads MTLRPGTMRL. The helical; Signal-anchor for type II membrane protein transmembrane segment at 11-31 threads the bilayer; sequence ACMFSSILLFGAAGLLLFISL. Topologically, residues 32–424 are lumenal; sequence QDPTELAPQQ…NYSKPFADLY (393 aa). Residues 47–107 form a disordered region; sequence FNIRPRQPHH…PLQRGTRLRL (61 aa). Residues 66–77 show a composition bias toward basic and acidic residues; sequence GDLKEPTERVTR. N-linked (GlcNAc...) asparagine glycosylation is present at asparagine 128. 3'-phosphoadenylyl sulfate is bound by residues 198 to 204 and 258 to 266; these read PKAGCSN and REPFERLVS. N-linked (GlcNAc...) asparagine glycosylation is found at asparagine 294, asparagine 367, and asparagine 415.

This sequence belongs to the sulfotransferase 2 family. Predominantly expressed in pituitary gland. In brain, it is expressed in pituitary gland, cerebellum, medulla oblongata, pons, thalamus and spinal cord. Expressed in the epidermis. Expressed at lower level in lung, spleen, adrenal gland, placenta, prostate, testis, mammary gland and trachea.

Its subcellular location is the golgi apparatus membrane. In terms of biological role, catalyzes the transfer of sulfate to position 4 of non-reducing N-acetylgalactosamine (GalNAc) residues in both N-glycans and O-glycans. Required for biosynthesis of glycoprotein hormones lutropin and thyrotropin, by mediating sulfation of their carbohydrate structures. Only active against terminal GalNAcbeta1,GalNAcbeta. Not active toward chondroitin. The sequence is that of Carbohydrate sulfotransferase 8 (CHST8) from Homo sapiens (Human).